A 279-amino-acid chain; its full sequence is Protoheme IX farnesyltransferase (279 aa).

The next 9 helical transmembrane spans lie at 1-21, 29-49, 79-99, 101-121, 128-148, 156-176, 200-220, 225-245, and 254-274; these read MIKPGIILGNIICLSGGFFLA, IFFLKTVFGLILIISSSCILN, ILFFFSIILLILGLLVFYIYI, FLCTIISFFGFFFYVYLYSYL, FSTFVGSVSGSLPPIIGYVAV, CTILFFMFSFWQIAHSYSIII, IIFISICILNLFFFNFLLYFF, FFYFLYTSFFIFLWFIFSFLS, and IWSRIMFFFSIFIIFMISFLM.

This sequence belongs to the UbiA prenyltransferase family. Protoheme IX farnesyltransferase subfamily.

Its subcellular location is the cell membrane. It catalyses the reaction heme b + (2E,6E)-farnesyl diphosphate + H2O = Fe(II)-heme o + diphosphate. It participates in porphyrin-containing compound metabolism; heme O biosynthesis; heme O from protoheme: step 1/1. Converts heme B (protoheme IX) to heme O by substitution of the vinyl group on carbon 2 of heme B porphyrin ring with a hydroxyethyl farnesyl side group. This Buchnera aphidicola subsp. Cinara cedri (strain Cc) protein is Protoheme IX farnesyltransferase.